The sequence spans 176 residues: NAD(P)H-quinone oxidoreductase subunit J (176 aa).

This sequence belongs to the complex I 30 kDa subunit family. NDH-1 can be composed of about 15 different subunits; different subcomplexes with different compositions have been identified which probably have different functions.

The protein localises to the cell inner membrane. It catalyses the reaction a plastoquinone + NADH + (n+1) H(+)(in) = a plastoquinol + NAD(+) + n H(+)(out). The enzyme catalyses a plastoquinone + NADPH + (n+1) H(+)(in) = a plastoquinol + NADP(+) + n H(+)(out). NDH-1 shuttles electrons from an unknown electron donor, via FMN and iron-sulfur (Fe-S) centers, to quinones in the respiratory and/or the photosynthetic chain. The immediate electron acceptor for the enzyme in this species is believed to be plastoquinone. Couples the redox reaction to proton translocation, and thus conserves the redox energy in a proton gradient. Cyanobacterial NDH-1 also plays a role in inorganic carbon-concentration. The chain is NAD(P)H-quinone oxidoreductase subunit J from Gloeobacter violaceus (strain ATCC 29082 / PCC 7421).